We begin with the raw amino-acid sequence, 203 residues long: ATP-dependent Clp protease proteolytic subunit (203 aa).

Serine 107 functions as the Nucleophile in the catalytic mechanism. Histidine 132 is a catalytic residue.

This sequence belongs to the peptidase S14 family. As to quaternary structure, fourteen ClpP subunits assemble into 2 heptameric rings which stack back to back to give a disk-like structure with a central cavity, resembling the structure of eukaryotic proteasomes.

The protein localises to the cytoplasm. It catalyses the reaction Hydrolysis of proteins to small peptides in the presence of ATP and magnesium. alpha-casein is the usual test substrate. In the absence of ATP, only oligopeptides shorter than five residues are hydrolyzed (such as succinyl-Leu-Tyr-|-NHMec, and Leu-Tyr-Leu-|-Tyr-Trp, in which cleavage of the -Tyr-|-Leu- and -Tyr-|-Trp bonds also occurs).. In terms of biological role, cleaves peptides in various proteins in a process that requires ATP hydrolysis. Has a chymotrypsin-like activity. Plays a major role in the degradation of misfolded proteins. This chain is ATP-dependent Clp protease proteolytic subunit, found in Shewanella denitrificans (strain OS217 / ATCC BAA-1090 / DSM 15013).